The primary structure comprises 466 residues: Alpha-1A adrenergic receptor (466 aa).

The Extracellular segment spans residues 1–27 (MVLLSENASEGSNCTHPPAPVNISKAI). N-linked (GlcNAc...) asparagine glycosylation is found at asparagine 7, asparagine 13, and asparagine 22. Residues 28 to 51 (LLGVILGGLIIFGVLGNILVILSV) traverse the membrane as a helical segment. The Cytoplasmic segment spans residues 52 to 64 (ACHRHLHSVTHYY). Residues 65–88 (IVNLAVADLLLTSTVLPFSAIFEI) form a helical membrane-spanning segment. Topologically, residues 89 to 99 (LGYWAFGRVFC) are extracellular. Cysteine 99 and cysteine 176 are joined by a disulfide. Residues 100 to 122 (NIWAAVDVLCCTASIMGLCIISI) traverse the membrane as a helical segment. Residues 123 to 143 (DRYIGVSYPLRYPTIVTQRRG) lie on the Cytoplasmic side of the membrane. A helical membrane pass occupies residues 144–167 (VRALLCVWVLSLVISIGPLFGWRQ). The Extracellular segment spans residues 168–181 (PAPEDETICQINEE). A helical transmembrane segment spans residues 182-205 (PGYVLFSALGSFYVPLAIILVMYC). Residues 206–273 (RVYVVAKRES…FSREKKAAKT (68 aa)) are Cytoplasmic-facing. Serine 215 carries the post-translational modification Phosphoserine; by PKA. A helical transmembrane segment spans residues 274–297 (LGIVVGCFVLCWLPFFLVMPIGSF). Topologically, residues 298 to 305 (FPDFKPSE) are extracellular. A helical membrane pass occupies residues 306 to 329 (TVFKIVFWLGYLNSCINPIIYPCS). Residues 330–466 (SQEFKKAFQN…ISLGENGEEV (137 aa)) lie on the Cytoplasmic side of the membrane. The Nuclear localization signal motif lies at 334–349 (KKAFQNVLRIQCLRRR). Cysteine 345 carries the S-palmitoyl cysteine lipid modification.

It belongs to the G-protein coupled receptor 1 family. Adrenergic receptor subfamily. ADRA1A sub-subfamily. In terms of assembly, homo- and heterooligomer. Heterooligomerizes with ADRA1B homooligomers in cardiac myocytes. Interacts with CAVIN4. Post-translationally, C-terminal Ser or Thr residues may be phosphorylated. In terms of tissue distribution, abundant in heart, brain, aorta, vena cava, vas deferens, submaxillary gland, lung, and kidney. Found at lower levels in prostate, parotid gland and skeletal muscle.

It is found in the nucleus membrane. It localises to the cell membrane. The protein resides in the cytoplasm. The protein localises to the membrane. Its subcellular location is the caveola. Functionally, this alpha-adrenergic receptor mediates its action by association with G proteins that activate a phosphatidylinositol-calcium second messenger system. Its effect is mediated by G(q) and G(11) proteins. Nuclear ADRA1A-ADRA1B heterooligomers regulate phenylephrine (PE)-stimulated ERK signaling in cardiac myocytes. The chain is Alpha-1A adrenergic receptor (Adra1a) from Rattus norvegicus (Rat).